The primary structure comprises 167 residues: N5-carboxyaminoimidazole ribonucleotide mutase (167 aa).

Substrate is bound by residues serine 11, aspartate 14, and arginine 41.

This sequence belongs to the AIR carboxylase family. Class I subfamily.

The catalysed reaction is 5-carboxyamino-1-(5-phospho-D-ribosyl)imidazole + H(+) = 5-amino-1-(5-phospho-D-ribosyl)imidazole-4-carboxylate. The protein operates within purine metabolism; IMP biosynthesis via de novo pathway; 5-amino-1-(5-phospho-D-ribosyl)imidazole-4-carboxylate from 5-amino-1-(5-phospho-D-ribosyl)imidazole (N5-CAIR route): step 2/2. Catalyzes the conversion of N5-carboxyaminoimidazole ribonucleotide (N5-CAIR) to 4-carboxy-5-aminoimidazole ribonucleotide (CAIR). The sequence is that of N5-carboxyaminoimidazole ribonucleotide mutase from Aquifex aeolicus (strain VF5).